The sequence spans 275 residues: Elongation factor Ts (275 aa).

Positions 76 to 79 (TDFV) are involved in Mg(2+) ion dislocation from EF-Tu.

It belongs to the EF-Ts family.

Its subcellular location is the cytoplasm. Associates with the EF-Tu.GDP complex and induces the exchange of GDP to GTP. It remains bound to the aminoacyl-tRNA.EF-Tu.GTP complex up to the GTP hydrolysis stage on the ribosome. This chain is Elongation factor Ts, found in Rhodococcus erythropolis (strain PR4 / NBRC 100887).